Consider the following 173-residue polypeptide: HTH-type transcriptional regulator IscR (173 aa).

The HTH rrf2-type domain occupies 2–131; sequence RLTSKGRYAV…NNITLGELMM (130 aa). The segment at residues 28 to 51 is a DNA-binding region (H-T-H motif); that stretch reads LADISERQGISLSYLEQLFSKLRK. [2Fe-2S] cluster contacts are provided by Cys-92, Cys-98, and Cys-104.

[2Fe-2S] cluster is required as a cofactor.

Functionally, regulates the transcription of several operons and genes involved in the biogenesis of Fe-S clusters and Fe-S-containing proteins. The polypeptide is HTH-type transcriptional regulator IscR (Vibrio cholerae serotype O1 (strain ATCC 39315 / El Tor Inaba N16961)).